Consider the following 113-residue polypeptide: Mini zinc finger protein 3 (113 aa).

Residues 24–83 (YGECRRNHAASTGGHAVDGCREFIAAEDGGGGNSTGAVGVAAAALKCAACGCHRSFHRRV) form a ZF-HD dimerization-type; degenerate zinc finger. Positions 93 to 113 (DCDSGDTSSSSPSSSSSLSSE) are disordered. The span at 97–113 (GDTSSSSPSSSSSLSSE) shows a compositional bias: low complexity.

As to quaternary structure, homo- and heterodimers.

It is found in the cytoplasm. In terms of biological role, inhibits zinc finger homeodomain (ZHD) transcription factors, by interacting with them to prevent both their nuclear localization and their DNA-binding properties. The protein is Mini zinc finger protein 3 (MIF3) of Oryza sativa subsp. indica (Rice).